The chain runs to 757 residues: MSCCASSAAIMVAEGGQASPASEELWLASRDLGGGLRQTELSVPNAYCGTCIATIEGALRAKPEVERARVNLSSRRVSIVWKEEVGGRRTNPCDFLHAIAERGYQTHLFSPGEEEGDDLLKQLILAVAVSGFAATNIMLLSVSVWSGADAATRDLFHWISALIAGPALIYAGRFFYKSAWNAIRHGRTNMDVPIALAVSLSYGMSLHETIGHGEHAWFDASVTLLFFLLIGRTLDHMMRGRARTAISGLARLSPRGATVVHPDGSREYRAVDEINPGDRLIVAAGERVPVDGRVLSGTSDLDRSVVNGESSPTVVTTGDTVQAGTLNLTGPLTLEATAAARDSFIAEIIGLMEAAEGGRARYRRIADRAARYYSPAVHLLALLTFVGWMLVEGDVRHAMLVAVAVLIITCPCALGLAVPVVQVVAAGRLFQGGVMVKDGSAMERLAEIDTVLLDKTGTLTIGKPRLVNAHEISPGRLATAAAIAVHSRHPIAVAIQNSAGAASPIAGDIREIPGAGIEVKTEDGVYRLGSRDFAVGGSGPDGRQSEAILSLDFRELACFRFEDQPRPASRESIEALGRLGIATGILSGDRAPVVAALASSLGISNWYAELSPREKVQVCAAAAEAGHKALVVGDGINDAPVLRAAHVSMAPATAADVGRQAADFVFMHERLSAVPFAIETSRHAGQLIRQNFALAIGYNVIAVPIAILGYATPLVAAVAMSSSSLVVVFNALRLKRSLAAGRGATPGTLIHSGAVTS.

The Cytoplasmic portion of the chain corresponds to 1-121 (MSCCASSAAI…GEEEGDDLLK (121 aa)). Residues 37–107 (RQTELSVPNA…AIAERGYQTH (71 aa)) enclose the HMA domain. A metal cation is bound by residues C48 and C51. The helical transmembrane segment at 122–143 (QLILAVAVSGFAATNIMLLSVS) threads the bilayer. Over 144–158 (VWSGADAATRDLFHW) the chain is Extracellular. A helical membrane pass occupies residues 159-178 (ISALIAGPALIYAGRFFYKS). Topologically, residues 179–185 (AWNAIRH) are cytoplasmic. Residues 186 to 206 (GRTNMDVPIALAVSLSYGMSL) form a helical membrane-spanning segment. The Extracellular portion of the chain corresponds to 207–218 (HETIGHGEHAWF). A helical transmembrane segment spans residues 219 to 239 (DASVTLLFFLLIGRTLDHMMR). The Cytoplasmic portion of the chain corresponds to 240-368 (GRARTAISGL…RARYRRIADR (129 aa)). The helical transmembrane segment at 369–391 (AARYYSPAVHLLALLTFVGWMLV) threads the bilayer. Topologically, residues 392–398 (EGDVRHA) are extracellular. The helical transmembrane segment at 399–416 (MLVAVAVLIITCPCALGL) threads the bilayer. The Cytoplasmic portion of the chain corresponds to 417 to 688 (AVPVVQVVAA…ETSRHAGQLI (272 aa)). D454 serves as the catalytic 4-aspartylphosphate intermediate. Mg(2+)-binding residues include D634 and D638. The chain crosses the membrane as a helical span at residues 689–708 (RQNFALAIGYNVIAVPIAIL). Over 709–713 (GYATP) the chain is Extracellular. A helical transmembrane segment spans residues 714–732 (LVAAVAMSSSSLVVVFNAL). Residues 733 to 757 (RLKRSLAAGRGATPGTLIHSGAVTS) lie on the Cytoplasmic side of the membrane.

This sequence belongs to the cation transport ATPase (P-type) (TC 3.A.3) family. Type IB subfamily.

It is found in the cell membrane. It catalyses the reaction ATP + H2O = ADP + phosphate + H(+). FixI is a pump of a specific cation involved in symbiotic nitrogen fixation. The four proteins FixG, FixH, FixI, and FixS may participate in a membrane-bound complex coupling the FixI cation pump with a redox process catalyzed by FixG. The polypeptide is Nitrogen fixation protein FixI (fixI) (Rhizobium meliloti (strain 1021) (Ensifer meliloti)).